Reading from the N-terminus, the 95-residue chain is Co-chaperonin GroES (95 aa).

It belongs to the GroES chaperonin family. As to quaternary structure, heptamer of 7 subunits arranged in a ring. Interacts with the chaperonin GroEL.

It localises to the cytoplasm. Together with the chaperonin GroEL, plays an essential role in assisting protein folding. The GroEL-GroES system forms a nano-cage that allows encapsulation of the non-native substrate proteins and provides a physical environment optimized to promote and accelerate protein folding. GroES binds to the apical surface of the GroEL ring, thereby capping the opening of the GroEL channel. The protein is Co-chaperonin GroES of Rickettsia rickettsii (strain Sheila Smith).